The sequence spans 933 residues: MEKYFNKTGYLFAGNAVFVEELYRQYLANPNSVDQTWQEFFADIKDNNALLNKSTAKVIRPNPNVTKALLNNNLSYEGLHNLKAKEMISAYRRNAHYLANLDPLGLEIRKTKDELKLNIEAFGLDSSQLEENINITDEFIGTWNCKLSELVTKLDKVYTSSIGVEFDQIENVEEKNWLYTKLETEITFASEEKRSILNDFVEVECFEQFLHTKFPGAKRFSIEGGDSSIVAMNKAIDLSMNQGVEEIVIGMAHRGRLNTLTKVVGKPYKAVIAGFINGNVFPDELNISGDVKYHLGYSADRVRANQKIHLSLADNPSHLEAINSIVAGKVRAKQDMLVDTKRSKVKAILLHGDAAFCGQGVVAESLSMSPLTAYNVGGILHFVINNQLGFTANAADTRASRYSTEFAKIIAAPILHVNGDDIEAVLKATDIAVEYRQKFSKDVVVEIICYRKYGHNEGDEPMYTQSKMYNIIKSKPTPGNIYANELVKSGIIDNNYYAKLKEKFKIKLDKEYEQAKSYKQESHFLGGCWKGISRTRGKAAITGVNKKILQDLGTKLCEIPKDFTINPKLVRLFEVRKNTLTTDQPIDWATAEQLAFAHLLCSGTNIRLTGQDSERGTFSHRHSILHNQIDDTTYIPLNNLSKTQAQYEVANSNLAEYAVLGFEYGYSLASPKNLVLWEAQFGDFANGAQIIFDQFISSSATKWLRMSGLVVLLPHAFEGQGPEHSSARLERFLQLAAEENMYITYPTTPASIFHLLRRQILESIRKPLIVMSPKSLLRHKYAVSKLDELGENTTFIPVLDEVTKIDKNNITKVILCSGKVYYDLFAKRVHNSNIVIIRLEQLYPFEKTLVASLLKKYNKAQAFIWCQEEPKNMGAWNYIAEHLNDALKEAEINNEFKYVGREESASPAVGSLQVHNKQQEKLLMEALGDDIIK.

This sequence belongs to the alpha-ketoglutarate dehydrogenase family. As to quaternary structure, homodimer. Part of the 2-oxoglutarate dehydrogenase (OGDH) complex composed of E1 (2-oxoglutarate dehydrogenase), E2 (dihydrolipoamide succinyltransferase) and E3 (dihydrolipoamide dehydrogenase); the complex contains multiple copies of the three enzymatic components (E1, E2 and E3). Requires thiamine diphosphate as cofactor.

The enzyme catalyses N(6)-[(R)-lipoyl]-L-lysyl-[protein] + 2-oxoglutarate + H(+) = N(6)-[(R)-S(8)-succinyldihydrolipoyl]-L-lysyl-[protein] + CO2. Its function is as follows. E1 component of the 2-oxoglutarate dehydrogenase (OGDH) complex which catalyzes the decarboxylation of 2-oxoglutarate, the first step in the conversion of 2-oxoglutarate to succinyl-CoA and CO(2). The sequence is that of 2-oxoglutarate dehydrogenase E1 component (sucA) from Rickettsia typhi (strain ATCC VR-144 / Wilmington).